The primary structure comprises 274 residues: 2,3,4,5-tetrahydropyridine-2,6-dicarboxylate N-succinyltransferase (274 aa).

Positions 105 and 142 each coordinate substrate.

Belongs to the transferase hexapeptide repeat family. As to quaternary structure, homotrimer.

It is found in the cytoplasm. The catalysed reaction is (S)-2,3,4,5-tetrahydrodipicolinate + succinyl-CoA + H2O = (S)-2-succinylamino-6-oxoheptanedioate + CoA. Its pathway is amino-acid biosynthesis; L-lysine biosynthesis via DAP pathway; LL-2,6-diaminopimelate from (S)-tetrahydrodipicolinate (succinylase route): step 1/3. This is 2,3,4,5-tetrahydropyridine-2,6-dicarboxylate N-succinyltransferase from Methylobacillus flagellatus (strain ATCC 51484 / DSM 6875 / VKM B-1610 / KT).